Consider the following 203-residue polypeptide: MEKMVMKMLVIFVFGMNHWTCTGFPVYDYDPASLKEALSASVAKVNSQSLSPYLFRAFRSSIKRVNALDEDSLTMDLEFRIQETTCRRESEADPATCDFQRGYHVPVAVCRSTVRMSAERVQDVWVRCHWSSSSGSSSSEEMFFGDILGSSTSRNSHLLGLTPDRSRGEPLYERSREMRRNFPLGNRRYSNPWPRARVNPGFE.

Positions 1-23 (MEKMVMKMLVIFVFGMNHWTCTG) are cleaved as a signal peptide. Disulfide bonds link cysteine 86–cysteine 97 and cysteine 110–cysteine 128. Serine 90 is modified (phosphoserine). Phosphoserine is present on residues serine 138, serine 139, serine 166, and serine 175. Residues 155–174 (NSHLLGLTPDRSRGEPLYER) are disordered. Over residues 164-174 (DRSRGEPLYER) the composition is skewed to basic and acidic residues.

The protein belongs to the SPP2 family. Post-translationally, multiply phosphorylated at serine residues. Phosphorylation sites are present in the extracellular medium.

The protein localises to the secreted. Could coordinate an aspect of bone turnover. The polypeptide is Secreted phosphoprotein 24 (SPP2) (Ovis aries (Sheep)).